A 407-amino-acid chain; its full sequence is Histone acetyltransferase mst2 (407 aa).

The MYST-type HAT domain occupies 98-372 (PQPTSIRYLY…VNPKLLRWTP (275 aa)). The C2HC MYST-type zinc-finger motif lies at 131-156 (LYICESCLKYMNSDHVLQRHKMKCSW). At Lys-198 the chain carries N6-acetyllysine; by autocatalysis. Acetyl-CoA is bound by residues 241 to 243 (ILT), Thr-243, and 248 to 254 (QRRGYGV). The active-site Proton donor/acceptor is the Glu-274. Acetyl-CoA-binding residues include Ser-278 and Ser-287.

The protein belongs to the MYST (SAS/MOZ) family. In terms of assembly, component of the mst2 complex composed of at least eaf6, mst2, nto1, pdp3, ptf1, ptf2 and tfg3. Autoacetylation at Lys-198 is required for proper function.

The protein localises to the cytoplasm. The protein resides in the nucleus. The catalysed reaction is L-lysyl-[protein] + acetyl-CoA = N(6)-acetyl-L-lysyl-[protein] + CoA + H(+). In terms of biological role, component of the mst2 complex which is a highly specific H3 lysine 14 (H3K14) acetyltransferase that functions together with gcn5 to regulate global levels of H3K14 acetylation (H3K14ac), critical for DNA damage checkpoint activation. Negatively regulates telomere silencing. Telomere silencing is increased due to histone hypoacetylation and/or an increase in the ratio of methylated histones to acetylated histones. Telomeric histone acetylation contributes to normal meiotic progression. This is Histone acetyltransferase mst2 (mst2) from Schizosaccharomyces pombe (strain 972 / ATCC 24843) (Fission yeast).